The following is a 448-amino-acid chain: Trigger factor (448 aa).

One can recognise a PPIase FKBP-type domain in the interval 161-246; it reads GDQVTIDFEG…VHKVAGKQLP (86 aa). Residues 428-448 are disordered; it reads ALQAAQQQEGAEEEAQEETSA. Acidic residues predominate over residues 437–448; it reads GAEEEAQEETSA.

The protein belongs to the FKBP-type PPIase family. Tig subfamily.

The protein resides in the cytoplasm. It catalyses the reaction [protein]-peptidylproline (omega=180) = [protein]-peptidylproline (omega=0). Functionally, involved in protein export. Acts as a chaperone by maintaining the newly synthesized protein in an open conformation. Functions as a peptidyl-prolyl cis-trans isomerase. In Chromohalobacter salexigens (strain ATCC BAA-138 / DSM 3043 / CIP 106854 / NCIMB 13768 / 1H11), this protein is Trigger factor.